Reading from the N-terminus, the 497-residue chain is Succinate-semialdehyde dehydrogenase [NADP(+)] (497 aa).

The Proton acceptor role is filled by Glu264. Cys298 acts as the Nucleophile in catalysis.

It belongs to the aldehyde dehydrogenase family. Homotetramer.

The protein localises to the cytoplasm. It catalyses the reaction succinate semialdehyde + NAD(+) + H2O = succinate + NADH + 2 H(+). The catalysed reaction is succinate semialdehyde + NADP(+) + H2O = succinate + NADPH + 2 H(+). The protein operates within amino-acid degradation; 4-aminobutanoate degradation. Inhibited by AMP, ADP anf ATP. Catalyzes the oxidation of succinate semialdehyde to succinate. Can utilize both NAD(+) or NADP(+) as a coenzyme, but has a 2.5-fold lower activity with NADP(+) than with NAD(+). Functions in a gamma-aminobutyrate (GABA) degradation pathway that allows growth utilizing GABA as a nitrogen source. Functions in the GABA shunt, which allows to bypass 2 reactions in the TCA cycle by removing alpha-ketoglutarate from the cycle and feeding succinate and NADH back into the cycle. This chain is Succinate-semialdehyde dehydrogenase [NADP(+)], found in Saccharomyces cerevisiae (strain ATCC 204508 / S288c) (Baker's yeast).